Consider the following 463-residue polypeptide: uncharacterized protein (463 aa).

Transmembrane regions (helical) follow at residues 21 to 40, 50 to 72, 84 to 104, 112 to 132, 156 to 176, 186 to 206, 237 to 257, 271 to 291, 311 to 331, 334 to 354, 367 to 387, and 408 to 428; these read DFAC…FFYT, AGTM…GTIV, PYLL…FTTP, LIYA…INVP, LFAN…AAYL, GWQL…IFCF, LVVL…SNSV, LVKW…PFIP, IIGL…ILVC, IAAA…PETI, GLIY…GGVV, and LMGI…LALI.

It belongs to the sodium:galactoside symporter (TC 2.A.2) family.

Its subcellular location is the cell membrane. This is an uncharacterized protein from Bacillus subtilis (strain 168).